We begin with the raw amino-acid sequence, 232 residues long: Ubiquinone biosynthesis O-methyltransferase (232 aa).

S-adenosyl-L-methionine-binding residues include Arg-36, Gly-55, Asp-76, and Leu-120.

This sequence belongs to the methyltransferase superfamily. UbiG/COQ3 family.

It catalyses the reaction a 3-demethylubiquinol + S-adenosyl-L-methionine = a ubiquinol + S-adenosyl-L-homocysteine + H(+). The enzyme catalyses a 3-(all-trans-polyprenyl)benzene-1,2-diol + S-adenosyl-L-methionine = a 2-methoxy-6-(all-trans-polyprenyl)phenol + S-adenosyl-L-homocysteine + H(+). It functions in the pathway cofactor biosynthesis; ubiquinone biosynthesis. Its function is as follows. O-methyltransferase that catalyzes the 2 O-methylation steps in the ubiquinone biosynthetic pathway. The polypeptide is Ubiquinone biosynthesis O-methyltransferase (Pseudomonas fluorescens (strain SBW25)).